Consider the following 1062-residue polypeptide: Carbamoyl phosphate synthase large chain (1062 aa).

Residues 1 to 401 are carboxyphosphate synthetic domain; sequence MPKRKDIHKI…AMQKAVRSLE (401 aa). Residues arginine 129, arginine 169, glycine 175, glycine 176, lysine 208, isoleucine 210, glutamate 215, glycine 241, isoleucine 242, histidine 243, glutamine 284, and glutamate 298 each coordinate ATP. The ATP-grasp 1 domain maps to 133–327; sequence KNLCKELGEP…IAKMAAKIAV (195 aa). Positions 284, 298, and 300 each coordinate Mg(2+). 3 residues coordinate Mn(2+): glutamine 284, glutamate 298, and asparagine 300. The interval 402-546 is oligomerization domain; sequence IDEKDLYSEE…YSTYDAENES (145 aa). Positions 547-929 are carbamoyl phosphate synthetic domain; it reads HRSGKKSVIV…ALYKAFAGAK (383 aa). Residues 671 to 861 form the ATP-grasp 2 domain; the sequence is DDIIKELKLN…MAQVATRVIM (191 aa). Positions 707, 746, 748, 752, 777, 778, 779, 780, 820, and 832 each coordinate ATP. Mg(2+)-binding residues include glutamine 820, glutamate 832, and asparagine 834. Mn(2+)-binding residues include glutamine 820, glutamate 832, and asparagine 834. The 133-residue stretch at 930–1062 folds into the MGS-like domain; the sequence is MQLPENGNVL…NRSFATDALQ (133 aa). Residues 930–1062 form an allosteric domain region; sequence MQLPENGNVL…NRSFATDALQ (133 aa).

Belongs to the CarB family. Composed of two chains; the small (or glutamine) chain promotes the hydrolysis of glutamine to ammonia, which is used by the large (or ammonia) chain to synthesize carbamoyl phosphate. Tetramer of heterodimers (alpha,beta)4. It depends on Mg(2+) as a cofactor. Requires Mn(2+) as cofactor.

It carries out the reaction hydrogencarbonate + L-glutamine + 2 ATP + H2O = carbamoyl phosphate + L-glutamate + 2 ADP + phosphate + 2 H(+). It catalyses the reaction hydrogencarbonate + NH4(+) + 2 ATP = carbamoyl phosphate + 2 ADP + phosphate + 2 H(+). Its pathway is amino-acid biosynthesis; L-arginine biosynthesis; carbamoyl phosphate from bicarbonate: step 1/1. It participates in pyrimidine metabolism; UMP biosynthesis via de novo pathway; (S)-dihydroorotate from bicarbonate: step 1/3. Large subunit of the glutamine-dependent carbamoyl phosphate synthetase (CPSase). CPSase catalyzes the formation of carbamoyl phosphate from the ammonia moiety of glutamine, carbonate, and phosphate donated by ATP, constituting the first step of 2 biosynthetic pathways, one leading to arginine and/or urea and the other to pyrimidine nucleotides. The large subunit (synthetase) binds the substrates ammonia (free or transferred from glutamine from the small subunit), hydrogencarbonate and ATP and carries out an ATP-coupled ligase reaction, activating hydrogencarbonate by forming carboxy phosphate which reacts with ammonia to form carbamoyl phosphate. The chain is Carbamoyl phosphate synthase large chain from Lactobacillus acidophilus (strain ATCC 700396 / NCK56 / N2 / NCFM).